Consider the following 478-residue polypeptide: V-type proton ATPase subunit H (478 aa).

The protein belongs to the V-ATPase H subunit family. As to quaternary structure, V-ATPase is a heteromultimeric enzyme composed of a peripheral catalytic V1 complex (components A to H) attached to an integral membrane V0 proton pore complex (components: a, c, c', c'', d, e, f and VOA1). Interacts with YND1.

Its subcellular location is the vacuole membrane. Subunit of the V1 complex of vacuolar(H+)-ATPase (V-ATPase), a multisubunit enzyme composed of a peripheral complex (V1) that hydrolyzes ATP and a membrane integral complex (V0) that translocates protons. V-ATPase is responsible for acidifying and maintaining the pH of intracellular compartments. This subunit is essential for activity, but not assembly, of the enzyme complex. This subunit is also required for silencing the ATPase activity of V-ATPase when V1 is detached from V0. This Saccharomyces cerevisiae (strain ATCC 204508 / S288c) (Baker's yeast) protein is V-type proton ATPase subunit H.